Here is a 465-residue protein sequence, read N- to C-terminus: SHC-transforming protein 1 (465 aa).

Positions 44–227 (MGPGVPYLVR…AGFDGSAWDE (184 aa)) constitute a PID domain. The tract at residues 228-369 (EEEELPDHAY…SMEDQLKREP (142 aa)) is CH1. Positions 281 to 315 (VSGAEQDSRKMQPTLQGRERFPVPCSRPPNRPDLF) are disordered. Positions 370–461 (WYQGKMSRKE…GSELCLQQPV (92 aa)) constitute an SH2 domain.

In terms of assembly, interacts with grb2. In terms of tissue distribution, highly expressed in oocytes and embryo. Also expressed in liver. Detected in ovary, testis and heart and to a lesser extent in liver (at protein level).

It is found in the cytoplasm. Implicated in ras-dependent oocyte maturation induced by insulin/IGF1. This Xenopus laevis (African clawed frog) protein is SHC-transforming protein 1 (shc1).